The following is a 422-amino-acid chain: Glutamate-1-semialdehyde 2,1-aminomutase (422 aa).

K258 carries the post-translational modification N6-(pyridoxal phosphate)lysine.

The protein belongs to the class-III pyridoxal-phosphate-dependent aminotransferase family. HemL subfamily. As to quaternary structure, homodimer. It depends on pyridoxal 5'-phosphate as a cofactor.

It is found in the cytoplasm. It catalyses the reaction (S)-4-amino-5-oxopentanoate = 5-aminolevulinate. It participates in porphyrin-containing compound metabolism; protoporphyrin-IX biosynthesis; 5-aminolevulinate from L-glutamyl-tRNA(Glu): step 2/2. This Chlamydia muridarum (strain MoPn / Nigg) protein is Glutamate-1-semialdehyde 2,1-aminomutase.